The primary structure comprises 162 residues: UPF0114 protein SO_3997 (162 aa).

A run of 3 helical transmembrane segments spans residues 10 to 32, 53 to 75, and 136 to 156; these read YASR…GLGI, LVLV…MVMF, and IMWY…MGYL.

This sequence belongs to the UPF0114 family.

It is found in the cell membrane. The polypeptide is UPF0114 protein SO_3997 (Shewanella oneidensis (strain ATCC 700550 / JCM 31522 / CIP 106686 / LMG 19005 / NCIMB 14063 / MR-1)).